Consider the following 883-residue polypeptide: Copper-transporting ATPase PAA2, chloroplastic (883 aa).

Residues methionine 1–serine 65 constitute a chloroplast transit peptide. The 71-residue stretch at threonine 76–lysine 146 folds into the HMA domain. Cu cation is bound by residues cysteine 87 and cysteine 90. 6 helical membrane passes run valine 179–histidine 199, glycine 209–leucine 229, methionine 250–valine 270, leucine 274–glycine 294, alanine 445–tryptophan 465, and valine 499–glycine 519. The active-site 4-aspartylphosphate intermediate is aspartate 548. Glycine 761–proline 768 provides a ligand contact to ATP. Aspartate 762 and aspartate 766 together coordinate Mg(2+). Helical transmembrane passes span leucine 822–proline 842 and phenylalanine 846–serine 866.

This sequence belongs to the cation transport ATPase (P-type) (TC 3.A.3) family. Type IB subfamily. As to expression, expressed in the shoots only and not in the roots.

It is found in the plastid. The protein localises to the chloroplast thylakoid membrane. It carries out the reaction Cu(2+)(in) + ATP + H2O = Cu(2+)(out) + ADP + phosphate + H(+). Mediates copper transfer across the chloroplast thylakoid membrane. Required for copper delivery into the thylakoids lumen, which is essential for the function of copper proteins. In Arabidopsis thaliana (Mouse-ear cress), this protein is Copper-transporting ATPase PAA2, chloroplastic (PAA2).